Here is a 200-residue protein sequence, read N- to C-terminus: dITP/XTP pyrophosphatase (200 aa).

Residue 7-12 (TSNKHK) participates in substrate binding. Positions 38 and 73 each coordinate Mg(2+). The Proton acceptor role is filled by Asp73. Substrate is bound by residues Ser74, 154–157 (FGYD), Lys177, and 182–183 (HR).

Belongs to the HAM1 NTPase family. As to quaternary structure, homodimer. It depends on Mg(2+) as a cofactor.

It catalyses the reaction XTP + H2O = XMP + diphosphate + H(+). It carries out the reaction dITP + H2O = dIMP + diphosphate + H(+). The catalysed reaction is ITP + H2O = IMP + diphosphate + H(+). Functionally, pyrophosphatase that catalyzes the hydrolysis of nucleoside triphosphates to their monophosphate derivatives, with a high preference for the non-canonical purine nucleotides XTP (xanthosine triphosphate), dITP (deoxyinosine triphosphate) and ITP. Seems to function as a house-cleaning enzyme that removes non-canonical purine nucleotides from the nucleotide pool, thus preventing their incorporation into DNA/RNA and avoiding chromosomal lesions. The protein is dITP/XTP pyrophosphatase of Campylobacter jejuni subsp. jejuni serotype O:2 (strain ATCC 700819 / NCTC 11168).